An 805-amino-acid polypeptide reads, in one-letter code: Sucrose synthase 1 (805 aa).

The tract at residues 274-751 (MVFNVVILSP…GLQRIYEKYT (478 aa)) is GT-B glycosyltransferase.

The protein belongs to the glycosyltransferase 1 family. Plant sucrose synthase subfamily.

It carries out the reaction an NDP-alpha-D-glucose + D-fructose = a ribonucleoside 5'-diphosphate + sucrose + H(+). Its function is as follows. Sucrose-cleaving enzyme that provides UDP-glucose and fructose for various metabolic pathways. This is Sucrose synthase 1 from Tulipa gesneriana (Garden tulip).